The chain runs to 247 residues: PF03932 family protein CutC (247 aa).

It belongs to the CutC family.

The protein resides in the cytoplasm. The protein is PF03932 family protein CutC of Vibrio campbellii (strain ATCC BAA-1116).